The sequence spans 178 residues: uncharacterized protein (178 aa).

4 helical membrane-spanning segments follow: residues 3–23 (IPIILTLMLFSLGFIFGFISI), 56–76 (IFLMLAGSITFGLSTFINLIF), 101–121 (LILPHGIFEISAMLISAVAGF), and 150–170 (LSLISIILIVIAAFIEVYITP).

This sequence to M.jannaschii MJ0706 and Synechocystis PCC 6803 slr1478.

The protein localises to the cell membrane. This is an uncharacterized protein from Methanocaldococcus jannaschii (strain ATCC 43067 / DSM 2661 / JAL-1 / JCM 10045 / NBRC 100440) (Methanococcus jannaschii).